A 199-amino-acid chain; its full sequence is 3-isopropylmalate dehydratase small subunit (199 aa).

This sequence belongs to the LeuD family. LeuD type 1 subfamily. Heterodimer of LeuC and LeuD.

The enzyme catalyses (2R,3S)-3-isopropylmalate = (2S)-2-isopropylmalate. It participates in amino-acid biosynthesis; L-leucine biosynthesis; L-leucine from 3-methyl-2-oxobutanoate: step 2/4. In terms of biological role, catalyzes the isomerization between 2-isopropylmalate and 3-isopropylmalate, via the formation of 2-isopropylmaleate. In Bacillus velezensis (strain DSM 23117 / BGSC 10A6 / LMG 26770 / FZB42) (Bacillus amyloliquefaciens subsp. plantarum), this protein is 3-isopropylmalate dehydratase small subunit.